Here is an 898-residue protein sequence, read N- to C-terminus: Interleukin enhancer-binding factor 3 (898 aa).

Residues 5-378 form the DZF domain; that stretch reads RIFVNDDRHV…PMKRPMEEDG (374 aa). The disordered stretch occupies residues 52-85; it reads QEKGNSELSEAENMDTPPDDESKEGAGEQKAEHM. Residues 60 to 73 show a composition bias toward acidic residues; that stretch reads SEAENMDTPPDDES. A Phosphothreonine modification is found at Thr-67. A compositionally biased stretch (basic and acidic residues) spans 74–85; it reads KEGAGEQKAEHM. The residue at position 100 (Lys-100) is an N6-acetyllysine. The residue at position 188 (Thr-188) is a Phosphothreonine; by PKR. A Phosphoserine modification is found at Ser-190. Lys-297 is covalently cross-linked (Glycyl lysine isopeptide (Lys-Gly) (interchain with G-Cter in ubiquitin)). A Phosphothreonine; by PKR modification is found at Thr-315. A Glycyl lysine isopeptide (Lys-Gly) (interchain with G-Cter in SUMO1) cross-link involves residue Lys-348. The interval 363 to 402 is disordered; sequence TTYAITPMKRPMEEDGEEKSPSKKKKKIQKKEEKADPPQA. Residues 371–389 carry the Bipartite nuclear localization signal motif; sequence KRPMEEDGEEKSPSKKKKK. Basic and acidic residues predominate over residues 372-383; that stretch reads RPMEEDGEEKSP. Ser-382 and Ser-384 each carry phosphoserine. Lys-396 is covalently cross-linked (Glycyl lysine isopeptide (Lys-Gly) (interchain with G-Cter in SUMO2)). Residues 398–467 enclose the DRBM 1 domain; sequence DPPQAMNALM…AVKVLQDMGL (70 aa). Lys-460 carries the N6-acetyllysine modification. Disordered stretches follow at residues 466-495 and 505-524; these read GLPT…IVAP and PSSV…LTKH. Basic and acidic residues predominate over residues 472–481; the sequence is EGRDSSKGED. Phosphoserine is present on residues Ser-476, Ser-477, Ser-482, and Ser-486. Lys-489 is covalently cross-linked (Glycyl lysine isopeptide (Lys-Gly) (interchain with G-Cter in SUMO2)). Positions 524 to 590 constitute a DRBM 2 domain; that stretch reads HGKNPVMELN…ALAALEKLFP (67 aa). Thr-592 is subject to Phosphothreonine. Positions 609-898 are interaction with PRMT1; sequence RGGPKFAAKP…TEHSMNYQYR (290 aa). Disordered stretches follow at residues 631–661 and 719–898; these read NEVP…GGAN and QGDS…YQYR. A compositionally biased stretch (gly residues) spans 644–661; it reads RGGNIRGRGRGRGFGGAN. 3 stretches are compositionally biased toward low complexity: residues 745 to 769, 783 to 794, and 802 to 812; these read SYSS…SSYG, GSYSSYSNSYNS, and DYSYDSKFNYS. Ser-794, Ser-812, Ser-814, and Ser-818 each carry phosphoserine. Over residues 813-822 the composition is skewed to gly residues; it reads GSGGRSGGNS. Over residues 823–834 the composition is skewed to low complexity; sequence YGSSGSSSYNTG. The span at 835-845 shows a compositional bias: gly residues; sequence SHGGYGTGSGG. Positions 846-886 are enriched in low complexity; the sequence is SSSYQGKQGGYSSQSNYSSPGSSQSYSGPASSYQSSQGGYS.

Identified in a IGF2BP1-dependent mRNP granule complex containing untranslated mRNAs. Interacts with FUS and SMN. Interacts (via C-terminus) with PRMT1. Forms a complex with ILF2. Can also bind to PRKDC/XRCC7: this may stabilize the interaction of PRKDC/XRCC7 and the heterodimeric complex of XRCC6/KU70 and XRCC5/KU80. Forms a heteromeric complex with ZNF346 and ILF3. Found in a nuclear export complex with XPO5, ILF3, Ran and double-stranded RNA or double-stranded minihelix VA1 RNA. Found in a nuclear export complex with XPO5, RAN, ILF3, ZNF346 and double-stranded RNA. Interacts with XPO5 and ZNF346. Forms a complex with ILF2, YLPM1, KHDRBS1, RBMX, NCOA5 and PPP1CA. Interacts with AGO1 and AGO2. Interacts with DHX36; this interaction occurs in a RNA-dependent manner. Interacts with ELAVL1; this interaction occurs in a RNA-dependent manner. Interacts with HAVCR2; this interaction promotes ILF3 ubiquitination and subsequent degradation. Post-translationally, phosphorylated at Thr-188 and Thr-315 by PKR in response to RNA viruses. This phosphorylation results in the dissociation of ILF2 from the ILF2-ILF3 complex resulting in a cytoplasmic sequestration of ILF3 where it can bind to viral RNAs and impede viral replication. Methylated by protein arginine N-methyltransferase 1. Ubiquitous. Expressed at high levels in the thymus, testis, ovary and at lower levelss in the spleen.

Its subcellular location is the nucleus. It is found in the nucleolus. It localises to the cytoplasm. Functionally, RNA-binding protein that plays an essential role in the biogenesis of circular RNAs (circRNAs) which are produced by back-splicing circularization of pre-mRNAs. Within the nucleus, promotes circRNAs processing by stabilizing the regulatory elements residing in the flanking introns of the circularized exons. Plays thereby a role in the back-splicing of a subset of circRNAs. As a consequence, participates in a wide range of transcriptional and post-transcriptional processes. Binds to poly-U elements and AU-rich elements (AREs) in the 3'-UTR of target mRNAs. Upon viral infection, ILF3 accumulates in the cytoplasm and participates in the innate antiviral response. Mechanistically, ILF3 becomes phosphorylated and activated by the double-stranded RNA-activated protein kinase/PKR which releases ILF3 from cellular mature circRNAs. In turn, unbound ILF3 molecules are able to interact with and thus inhibit viral mRNAs. This Mus musculus (Mouse) protein is Interleukin enhancer-binding factor 3 (Ilf3).